A 405-amino-acid chain; its full sequence is Sesquiterpene synthase 16 (405 aa).

Residues Asp-155, Asp-159, and Glu-309 each coordinate Mg(2+). The DDXXD motif motif lies at 155-159 (DDTYD).

Belongs to the terpene synthase family. Tpsa subfamily. Mg(2+) is required as a cofactor. It depends on Mn(2+) as a cofactor.

It participates in secondary metabolite biosynthesis; terpenoid biosynthesis. Functionally, sesquiterpene synthase involved in the biosynthesis of volatile compounds. No activity detected with geranyl diphosphate (GPP) and farnesyl diphosphate (FPP) as substrates. This chain is Sesquiterpene synthase 16, found in Solanum habrochaites (Wild tomato).